The sequence spans 311 residues: 4-hydroxy-3-methylbut-2-enyl diphosphate reductase (311 aa).

Position 12 (cysteine 12) interacts with [4Fe-4S] cluster. 2 residues coordinate (2E)-4-hydroxy-3-methylbut-2-enyl diphosphate: histidine 41 and histidine 74. The dimethylallyl diphosphate site is built by histidine 41 and histidine 74. Isopentenyl diphosphate is bound by residues histidine 41 and histidine 74. [4Fe-4S] cluster is bound at residue cysteine 96. Residue histidine 124 coordinates (2E)-4-hydroxy-3-methylbut-2-enyl diphosphate. Histidine 124 serves as a coordination point for dimethylallyl diphosphate. Residue histidine 124 coordinates isopentenyl diphosphate. The active-site Proton donor is the glutamate 126. Position 167 (threonine 167) interacts with (2E)-4-hydroxy-3-methylbut-2-enyl diphosphate. Residue cysteine 197 coordinates [4Fe-4S] cluster. (2E)-4-hydroxy-3-methylbut-2-enyl diphosphate contacts are provided by serine 225, serine 226, asparagine 227, and serine 269. Dimethylallyl diphosphate-binding residues include serine 225, serine 226, asparagine 227, and serine 269. Isopentenyl diphosphate-binding residues include serine 225, serine 226, asparagine 227, and serine 269.

The protein belongs to the IspH family. Requires [4Fe-4S] cluster as cofactor.

It catalyses the reaction isopentenyl diphosphate + 2 oxidized [2Fe-2S]-[ferredoxin] + H2O = (2E)-4-hydroxy-3-methylbut-2-enyl diphosphate + 2 reduced [2Fe-2S]-[ferredoxin] + 2 H(+). The enzyme catalyses dimethylallyl diphosphate + 2 oxidized [2Fe-2S]-[ferredoxin] + H2O = (2E)-4-hydroxy-3-methylbut-2-enyl diphosphate + 2 reduced [2Fe-2S]-[ferredoxin] + 2 H(+). The protein operates within isoprenoid biosynthesis; dimethylallyl diphosphate biosynthesis; dimethylallyl diphosphate from (2E)-4-hydroxy-3-methylbutenyl diphosphate: step 1/1. Its pathway is isoprenoid biosynthesis; isopentenyl diphosphate biosynthesis via DXP pathway; isopentenyl diphosphate from 1-deoxy-D-xylulose 5-phosphate: step 6/6. Functionally, catalyzes the conversion of 1-hydroxy-2-methyl-2-(E)-butenyl 4-diphosphate (HMBPP) into a mixture of isopentenyl diphosphate (IPP) and dimethylallyl diphosphate (DMAPP). Acts in the terminal step of the DOXP/MEP pathway for isoprenoid precursor biosynthesis. In Aeromonas salmonicida (strain A449), this protein is 4-hydroxy-3-methylbut-2-enyl diphosphate reductase.